The chain runs to 702 residues: Autophagy-related protein 9 (702 aa).

The Cytoplasmic portion of the chain corresponds to 1–205 (MFYQPAQNKK…GKGLSCIIVH (205 aa)). The disordered stretch occupies residues 35–128 (QESLDSDEDE…SKQKPALPNF (94 aa)). The span at 38–47 (LDSDEDESSP) shows a compositional bias: acidic residues. Low complexity predominate over residues 94–107 (SSKVPSKHPSPSFP). Residues 108–120 (ETTSLRNLQNGSK) are compositionally biased toward polar residues. The chain crosses the membrane as a helical span at residues 206-223 (RLFQILTVSFVIGFTTFI). Residues 224-251 (TSCIDWPAVTPHGSLAGVTKSQCIAQMS) lie on the Lumenal side of the membrane. A helical membrane pass occupies residues 252–270 (PITYLVLWLFLSFLLALWI). Over 271 to 421 (YYLTDIPRLW…RRRFIVAGFL (151 aa)) the chain is Cytoplasmic. An intramembrane segment occupies 422–446 (NCLFAPIVAIYLVIHNFFRYFNEYH). Residues 447–496 (KNPGALSTRRYTPLALWTFREYNELQHFFDERINDSYAAASHYVSQFPDF) lie on the Cytoplasmic side of the membrane. Residues 497–522 (NMIRLFKYISFILGSFTAILVIITVF) form a helical membrane-spanning segment. At 523–537 (DPELMVTFEITKDRS) the chain is on the lumenal side. The helical transmembrane segment at 538 to 555 (VLFYLGLFGSLIAVSRSI) threads the bilayer. Over 556–603 (IPDETLVFAPEKALRRVITFTHYMPGWWSDNMHSKAVQQEFCSLYSYR) the chain is Cytoplasmic. Residues 604-624 (IVNLLWEILGILLTPVLLFFT) lie within the membrane without spanning it. Topologically, residues 625–702 (FPSCSQDIVD…NTEAPRRDLR (78 aa)) are cytoplasmic.

It belongs to the ATG9 family. As to quaternary structure, homotrimer; forms a homotrimer with a central pore that forms a path between the two membrane leaflets. Interacts with ctl1. In terms of processing, phosphorylated by atg1. Atg1 phosphorylation is required for preautophagosome elongation.

It is found in the preautophagosomal structure membrane. The protein localises to the cytoplasmic vesicle membrane. The protein resides in the golgi apparatus membrane. Its subcellular location is the endoplasmic reticulum membrane. The catalysed reaction is a 1,2-diacyl-sn-glycero-3-phosphocholine(in) = a 1,2-diacyl-sn-glycero-3-phosphocholine(out). The enzyme catalyses a 1,2-diacyl-sn-glycero-3-phospho-L-serine(in) = a 1,2-diacyl-sn-glycero-3-phospho-L-serine(out). It catalyses the reaction a 1,2-diacyl-sn-glycero-3-phosphoethanolamine(in) = a 1,2-diacyl-sn-glycero-3-phosphoethanolamine(out). It carries out the reaction a 1,2-diacyl-sn-glycero-3-phospho-(1D-myo-inositol-3-phosphate)(in) = a 1,2-diacyl-sn-glycero-3-phospho-(1D-myo-inositol-3-phosphate)(out). In terms of biological role, phospholipid scramblase involved in autophagy and cytoplasm to vacuole transport (Cvt) vesicle formation. Cycles between the preautophagosomal structure/phagophore assembly site (PAS) and the cytoplasmic vesicle pool and supplies membrane for the growing autophagosome. Lipid scramblase activity plays a key role in preautophagosomal structure/phagophore assembly by distributing the phospholipids that arrive through atg2 from the cytoplasmic to the luminal leaflet of the bilayer, thereby driving autophagosomal membrane expansion. Also involved in endoplasmic reticulum-specific autophagic process and is essential for the survival of cells subjected to severe ER stress. Different machineries are required for anterograde trafficking to the PAS during either the Cvt pathway or bulk autophagy and for retrograde trafficking. Has a role in meiosis and sporulation. This chain is Autophagy-related protein 9, found in Schizosaccharomyces pombe (strain 972 / ATCC 24843) (Fission yeast).